The sequence spans 127 residues: Unclassified hydrophobin 5 (127 aa).

The signal sequence occupies residues 1–24 (MFNKQTNAIVLLFTFALFATLAVA). Intrachain disulfides connect C39–C107, C46–C101, C47–C92, and C108–C121.

This sequence belongs to the fungal hydrophobin family. Self-assembles to form functional amyloid fibrils called rodlets. Self-assembly into fibrillar rodlets occurs spontaneously at hydrophobic:hydrophilic interfaces and the rodlets further associate laterally to form amphipathic monolayers.

It is found in the secreted. It localises to the cell wall. In terms of biological role, aerial growth, conidiation, and dispersal of filamentous fungi in the environment rely upon a capability of their secreting small amphipathic proteins called hydrophobins (HPBs) with low sequence identity. Class I can self-assemble into an outermost layer of rodlet bundles on aerial cell surfaces, conferring cellular hydrophobicity that supports fungal growth, development and dispersal; whereas Class II form highly ordered films at water-air interfaces through intermolecular interactions but contribute nothing to the rodlet structure. This chain is Unclassified hydrophobin 5, found in Pleurotus ostreatus (strain PC15) (Oyster mushroom).